We begin with the raw amino-acid sequence, 115 residues long: Large ribosomal subunit protein bL19 (115 aa).

The protein belongs to the bacterial ribosomal protein bL19 family.

Its function is as follows. This protein is located at the 30S-50S ribosomal subunit interface and may play a role in the structure and function of the aminoacyl-tRNA binding site. In Akkermansia muciniphila (strain ATCC BAA-835 / DSM 22959 / JCM 33894 / BCRC 81048 / CCUG 64013 / CIP 107961 / Muc), this protein is Large ribosomal subunit protein bL19.